Here is a 278-residue protein sequence, read N- to C-terminus: tRNA (guanine-N(7)-)-methyltransferase (278 aa).

Residues G95, 118–119 (EI), 153–154 (NA), and C173 each bind S-adenosyl-L-methionine. D176 is an active-site residue. An S-adenosyl-L-methionine-binding site is contributed by 251 to 253 (TEE).

The protein belongs to the class I-like SAM-binding methyltransferase superfamily. TrmB family. In terms of assembly, forms a complex with TRM82.

It localises to the nucleus. The enzyme catalyses guanosine(46) in tRNA + S-adenosyl-L-methionine = N(7)-methylguanosine(46) in tRNA + S-adenosyl-L-homocysteine. The protein operates within tRNA modification; N(7)-methylguanine-tRNA biosynthesis. Functionally, catalyzes the formation of N(7)-methylguanine at position 46 (m7G46) in tRNA. This Kluyveromyces lactis (strain ATCC 8585 / CBS 2359 / DSM 70799 / NBRC 1267 / NRRL Y-1140 / WM37) (Yeast) protein is tRNA (guanine-N(7)-)-methyltransferase.